The chain runs to 298 residues: MRKTENTNDKSTALDEMNALDIVTLMNEEDHTVPRAITPCLPLIAEAAETIVSRFEQGGRVFTAGAGTSGRIAVLDAAELPPTFSIDESRWTGLIAGGYDAMWMPLEENEDDREKIVADLKAQSFSKDDVLIGVTASGSTPYVLGALSYAKQIGAASVSISCNADTEAGKLSDIAIEVQTGPEIIRGSTRLKAGTAQKMILNMLSTAAMVRLGRVYQNEMVNMRLLNQKLAGRAVTILMNTTGLSEDEALQALKESGNDIKAAIFMTLTNGTLEVARRCLSHENGHLKKAIQYHRKGF.

The SIS domain maps to Ile-51–Arg-214. Glu-79 serves as the catalytic Proton donor. The active site involves Glu-110.

It belongs to the GCKR-like family. MurNAc-6-P etherase subfamily. As to quaternary structure, homodimer.

The catalysed reaction is N-acetyl-D-muramate 6-phosphate + H2O = N-acetyl-D-glucosamine 6-phosphate + (R)-lactate. The protein operates within amino-sugar metabolism; N-acetylmuramate degradation. Functionally, specifically catalyzes the cleavage of the D-lactyl ether substituent of MurNAc 6-phosphate, producing GlcNAc 6-phosphate and D-lactate. This is N-acetylmuramic acid 6-phosphate etherase 2 from Bacillus licheniformis (strain ATCC 14580 / DSM 13 / JCM 2505 / CCUG 7422 / NBRC 12200 / NCIMB 9375 / NCTC 10341 / NRRL NRS-1264 / Gibson 46).